The sequence spans 38 residues: Photosystem I reaction center subunit IX (38 aa).

A helical membrane pass occupies residues 4-24; sequence FLTTAPVVAAIWFTATAGILI.

Belongs to the PsaJ family.

It localises to the cellular thylakoid membrane. May help in the organization of the PsaE and PsaF subunits. In Synechococcus sp. (strain CC9902), this protein is Photosystem I reaction center subunit IX.